Reading from the N-terminus, the 489-residue chain is N-succinylglutamate 5-semialdehyde dehydrogenase (489 aa).

Residue 223-228 participates in NAD(+) binding; it reads GSASTG. Residues E246 and C280 contribute to the active site.

This sequence belongs to the aldehyde dehydrogenase family. AstD subfamily.

It catalyses the reaction N-succinyl-L-glutamate 5-semialdehyde + NAD(+) + H2O = N-succinyl-L-glutamate + NADH + 2 H(+). It functions in the pathway amino-acid degradation; L-arginine degradation via AST pathway; L-glutamate and succinate from L-arginine: step 4/5. Its function is as follows. Catalyzes the NAD-dependent reduction of succinylglutamate semialdehyde into succinylglutamate. This chain is N-succinylglutamate 5-semialdehyde dehydrogenase, found in Acinetobacter baylyi (strain ATCC 33305 / BD413 / ADP1).